The primary structure comprises 552 residues: Ferry endosomal RAB5 effector complex subunit 3 (552 aa).

The disordered stretch occupies residues 383–403 (LKESLDSGNQNGGNDDKTKNA).

Component of the FERRY complex composed of five subunits, TBCK, PPP1R21, FERRY3, CRYZL1 and GATD1 with a ratio of 1:2:1:2:4, respectively.

It is found in the cytoplasm. It localises to the early endosome. Component of the FERRY complex (Five-subunit Endosomal Rab5 and RNA/ribosome intermediary). The FERRY complex directly interacts with mRNAs and RAB5A, and functions as a RAB5A effector involved in the localization and the distribution of specific mRNAs most likely by mediating their endosomal transport. The complex recruits mRNAs and ribosomes to early endosomes through direct mRNA-interaction. Plays a role in mast cell degranulation. The polypeptide is Ferry endosomal RAB5 effector complex subunit 3 (Homo sapiens (Human)).